Here is a 462-residue protein sequence, read N- to C-terminus: L-seryl-tRNA(Sec) selenium transferase (462 aa).

Lys292 bears the N6-(pyridoxal phosphate)lysine mark.

The protein belongs to the SelA family. It depends on pyridoxal 5'-phosphate as a cofactor.

Its subcellular location is the cytoplasm. It carries out the reaction L-seryl-tRNA(Sec) + selenophosphate + H(+) = L-selenocysteinyl-tRNA(Sec) + phosphate. It functions in the pathway aminoacyl-tRNA biosynthesis; selenocysteinyl-tRNA(Sec) biosynthesis; selenocysteinyl-tRNA(Sec) from L-seryl-tRNA(Sec) (bacterial route): step 1/1. Converts seryl-tRNA(Sec) to selenocysteinyl-tRNA(Sec) required for selenoprotein biosynthesis. In Clostridium perfringens (strain 13 / Type A), this protein is L-seryl-tRNA(Sec) selenium transferase.